Reading from the N-terminus, the 157-residue chain is Transcription elongation factor GreA (157 aa).

Belongs to the GreA/GreB family.

In terms of biological role, necessary for efficient RNA polymerase transcription elongation past template-encoded arresting sites. The arresting sites in DNA have the property of trapping a certain fraction of elongating RNA polymerases that pass through, resulting in locked ternary complexes. Cleavage of the nascent transcript by cleavage factors such as GreA or GreB allows the resumption of elongation from the new 3'terminus. GreA releases sequences of 2 to 3 nucleotides. In Caulobacter sp. (strain K31), this protein is Transcription elongation factor GreA.